Consider the following 284-residue polypeptide: Proteasome subunit pbs-5 (284 aa).

The propeptide at 1–64 is removed in mature form; it reads MWGETFDDFE…AGKSMQFRKG (64 aa). Thr65 acts as the Nucleophile in catalysis.

Belongs to the peptidase T1B family. The 26S proteasome consists of a 20S proteasome core and two 19S regulatory subunits. The 20S proteasome core is composed of 28 subunits that are arranged in four stacked rings, resulting in a barrel-shaped structure. The two end rings are each formed by seven alpha subunits, and the two central rings are each formed by seven beta subunits. The catalytic chamber with the active sites is on the inside of the barrel.

The protein localises to the cytoplasm. It is found in the nucleus. It catalyses the reaction Cleavage of peptide bonds with very broad specificity.. Component of the 20S core proteasome complex involved in the proteolytic degradation of most intracellular proteins. This complex plays numerous essential roles within the cell by associating with different regulatory particles. Associated with two 19S regulatory particles, forms the 26S proteasome and thus participates in the ATP-dependent degradation of ubiquitinated proteins. The 26S proteasome plays a key role in the maintenance of protein homeostasis by removing misfolded or damaged proteins that could impair cellular functions, and by removing proteins whose functions are no longer required. In Caenorhabditis elegans, this protein is Proteasome subunit pbs-5.